A 1529-amino-acid polypeptide reads, in one-letter code: MAFAGVGQGIGTYDRTEQASGAPLGRVTSRAHFTDIHPSDDLPAQTEENRAREVGHLARQLTRQSVTVTDDSTDVFSYQEGSDLDPFSDKFNAKKWTKLMFEAVQTCGPARKAGLSFRNLGVHGFGSDADYQKTVGNLPLVGIGSLRDLIGNRKRKVQILNSMDGVLEAGEMLVVLGPPGSGCTTMLKTIAGEMNGIYLDESSSLNYRGITPKEIYGQFRGEAIYTAEVDIHFPNLTVGQTLSFAAEARAPRNPPGGISKKEYAKHMRDVVMSVFGISHTLNTIVGNDFVRGVSGGERKRVTIAEASLAGAPLQCWDNSTRGLDSANAIEFCKNLRLNADYMGISSAVAIYQAPQSAYDCFDKVSVLYEGEQIFFGKTTDAKQFFVDMGFHCPSQQTVPDFLTSLTSPSERRPREGFEGKVPTTPQEFAARWKQSDKYQELLAQIAEFENKYPVHGEKYREFLESRRAQQSKHLRSKSPYTLSYGGQVELCLRRGFDRLRADPSLTLTQLFGNFIMALIIGSVFYNLPVTTSSFYSRGALLFFAILMSAFGSALEILILYAQRGIVEKHSRYAFYHPSAEAVASALTDIPYKVMNCIIFNLTLYFMTNLRREPGAYFFFMLISFTLTMVMSMLFRSIASLSRSLTQALAPAALLILGLVMYTGFAVNVANMRGWARWMNWLDPIAYGFESLMINEFHGREYECSTFVPMGPGYEDATGQQHVCSTAGAVAGSSVVNGDAYINLSYEYYHAHKWRNFGILIGFFLFFTAIYLTATEFITAKKSKGEILVFPRGKIPHALLAQSTHSHGSSDDVEGGKFAGGSNMKKEITGADRANAGIIQKQTAIFSWKDVVYDIKIKKEPRRILDHVDGWVKPGTLTALMGVSGAGKTTLLDVLATRVTMGVVTGEMLVDGKQRDLSFQRKTGYVQQQDLHLETSTVREALRFSAILRQPNTVSIKEKYEYVEEVLKLLEMDGYADAVVGVPGTGLNVEQRKRLTIGVELVAKPALLLFLDEPTSGLDSQTSWNILLLLRKLTEHGQAILCTIHQPSAMLFEQFDRLLFLARGGKTVYFGEVGKGSRILIDYFEKNGASKCPEGENPAEWMLAAIGAAPGSHSEVDWHQTWINSPERIEVRSELARIKETQGGKGEAALQNKDYEKSKAEVKAEYAEFASPLWKQFIVVLMRVWQQHWRTPSYIWAKVALCSLSGLFIGFSFFKAGTSQQGLQNQLFSVFMMFTIFGQLTQQIMPNFVTQRSLYEVRERPSKTYSWKIFILSNIVSEIPWAILMGVIIYFTWYYPIGYYRNAIPEDAVHLRGALMFLYIEMFLLFNATFSIMIVAGIATAETAGNIANLLFSMCLIFCGVLASGSSLPGFWVFMYRVSPFTYLVEGMLSVAVANTDVVCSDIEFLTFNPPSGQSCGDYMSTFITNYGGYLVDENATTACEFCSMSKTNTFLAQFDIYYSNKWRDFGLLWVYVVFNVIAAIGIYWLARVPKNTGKERASEPEDVQEKQVPAQSTEKKYQSISRSSESTVA.

One can recognise an ABC transporter 1 domain in the interval 144–394 (GSLRDLIGNR…FVDMGFHCPS (251 aa)). Residues Asn-235 and Asn-318 are each glycosylated (N-linked (GlcNAc...) asparagine). 5 helical membrane-spanning segments follow: residues 510-530 (LFGN…LPVT), 539-559 (ALLF…ILIL), 589-609 (IPYK…MTNL), 614-634 (GAYF…SMLF), and 648-668 (LAPA…AVNV). Residue Asn-742 is glycosylated (N-linked (GlcNAc...) asparagine). A helical membrane pass occupies residues 757–777 (GILIGFFLFFTAIYLTATEFI). One can recognise an ABC transporter 2 domain in the interval 845–1087 (FSWKDVVYDI…ILIDYFEKNG (243 aa)). 881-888 (GVSGAGKT) contacts ATP. The next 5 helical transmembrane spans lie at 1193 to 1213 (YIWA…FSFF), 1229 to 1249 (VFMM…NFVT), 1268 to 1288 (IFIL…GVII), 1314 to 1334 (LMFL…IMIV), and 1353 to 1373 (MCLI…FWVF). Asn-1434 carries N-linked (GlcNAc...) asparagine glycosylation. A helical transmembrane segment spans residues 1465-1485 (FGLLWVYVVFNVIAAIGIYWL). Residues 1493-1505 (GKERASEPEDVQE) are compositionally biased toward basic and acidic residues. Residues 1493-1529 (GKERASEPEDVQEKQVPAQSTEKKYQSISRSSESTVA) are disordered. The segment covering 1518-1529 (QSISRSSESTVA) has biased composition (polar residues).

The protein belongs to the ABC transporter superfamily. ABCG family. PDR (TC 3.A.1.205) subfamily.

The protein resides in the cell membrane. It catalyses the reaction itraconazole(in) + ATP + H2O = itraconazole(out) + ADP + phosphate + H(+). The catalysed reaction is voriconazole(in) + ATP + H2O = voriconazole(out) + ADP + phosphate + H(+). It carries out the reaction fluconazole(in) + ATP + H2O = fluconazole(out) + ADP + phosphate + H(+). Its function is as follows. Pleiotropic ABC efflux transporter that confers resistance to structurally and functionally unrelated compounds including azoles such as fluconazole (FLC), itraconazole (ITC), posaconazole (POS), and voriconazole (VRC). The sequence is that of ABC multidrug transporter AFR2 from Cryptococcus deuterogattii (strain R265) (Cryptococcus gattii VGII (strain R265)).